The sequence spans 132 residues: Protein LEKR1 (132 aa).

A coiled-coil region spans residues 37–116 (FKAMEEKVKA…KKQLSHLQDE (80 aa)).

The polypeptide is Protein LEKR1 (LEKR1) (Homo sapiens (Human)).